A 435-amino-acid chain; its full sequence is Rho GTPase-activating protein 4 (435 aa).

Residues 1–59 (MAKVLKSSQSCHFPSPSSSSSTSCGGGNDGSNRDPHSPFNISRREEEEEEEERSEKERE) form a disordered region. The segment covering 7-23 (SSQSCHFPSPSSSSSTS) has biased composition (low complexity). A CRIB domain is found at 93–106 (IGVPTDVRHVAHVT). In terms of domain architecture, Rho-GAP spans 138–319 (VSTESMQLSY…LIVKTLKDRK (182 aa)). The interval 321-343 (SRDKLVPASNPSPRDHNGDQSSS) is disordered.

In terms of biological role, acts as a GTPase activator for the Rac-type GTPase by converting it to an inactive GDP-bound state. Acts as a negative feedback regulator in tolerance to oxygen deprivation which requires ARAC4/ROP2. The chain is Rho GTPase-activating protein 4 (ROPGAP4) from Arabidopsis thaliana (Mouse-ear cress).